The following is a 286-amino-acid chain: uncharacterized protein (286 aa).

A helical membrane pass occupies residues 8–28 (PLSGFISSLIWWLLFFYLIMA).

To M.jannaschii MJ1495.

The protein localises to the membrane. This is an uncharacterized protein from Methanocaldococcus jannaschii (strain ATCC 43067 / DSM 2661 / JAL-1 / JCM 10045 / NBRC 100440) (Methanococcus jannaschii).